Here is an 89-residue protein sequence, read N- to C-terminus: Ragulator complex protein LAMTOR5 homolog (89 aa).

It belongs to the LAMTOR5 family. As to quaternary structure, part of the Ragulator complex.

It is found in the cytoplasm. It localises to the lysosome. In terms of biological role, regulator of the TOR pathway, a signaling cascade that promotes cell growth in response to growth factors, energy levels, and amino acids. As part of the Ragulator complex, may activate the TOR signaling cascade in response to amino acids. The chain is Ragulator complex protein LAMTOR5 homolog from Dictyostelium discoideum (Social amoeba).